Here is a 363-residue protein sequence, read N- to C-terminus: tRNA/tmRNA (uracil-C(5))-methyltransferase (363 aa).

Residues Gln-187, Tyr-215, Asn-220, Glu-236, and Asp-296 each contribute to the S-adenosyl-L-methionine site. Cys-321 acts as the Nucleophile in catalysis. The active-site Proton acceptor is the Glu-355.

Belongs to the class I-like SAM-binding methyltransferase superfamily. RNA M5U methyltransferase family. TrmA subfamily.

The catalysed reaction is uridine(54) in tRNA + S-adenosyl-L-methionine = 5-methyluridine(54) in tRNA + S-adenosyl-L-homocysteine + H(+). The enzyme catalyses uridine(341) in tmRNA + S-adenosyl-L-methionine = 5-methyluridine(341) in tmRNA + S-adenosyl-L-homocysteine + H(+). Dual-specificity methyltransferase that catalyzes the formation of 5-methyluridine at position 54 (m5U54) in all tRNAs, and that of position 341 (m5U341) in tmRNA (transfer-mRNA). This is tRNA/tmRNA (uracil-C(5))-methyltransferase from Pseudomonas aeruginosa (strain ATCC 15692 / DSM 22644 / CIP 104116 / JCM 14847 / LMG 12228 / 1C / PRS 101 / PAO1).